The primary structure comprises 583 residues: Protein disulfide-isomerase-like protein of the testis (583 aa).

The signal sequence occupies residues methionine 1–alanine 17. N-linked (GlcNAc...) asparagine glycans are attached at residues asparagine 58, asparagine 128, asparagine 160, and asparagine 340. Residues leucine 388–aspartate 451 form the Thioredoxin domain. Composition is skewed to basic and acidic residues over residues glutamate 522–proline 531 and asparagine 540–glutamate 559. Positions glutamate 522 to leucine 583 are disordered. Asparagine 540 carries N-linked (GlcNAc...) asparagine glycosylation. Positions glutamine 573–leucine 583 are enriched in basic residues. The Prevents secretion from ER signature appears at lysine 580–leucine 583.

Belongs to the protein disulfide isomerase family. In terms of assembly, homodimer. The homodimer is not disulfide-linked. Interacts with ERO1A and CLGN. In terms of processing, N-glycosylated.

It localises to the endoplasmic reticulum. Probable redox-inactive chaperone involved in spermatogenesis. The protein is Protein disulfide-isomerase-like protein of the testis (PDILT) of Macaca fascicularis (Crab-eating macaque).